We begin with the raw amino-acid sequence, 128 residues long: Small ribosomal subunit protein eS8 (128 aa).

Residues Met1–Pro31 form a disordered region. Over residues Thr13 to Glu27 the composition is skewed to basic residues.

Belongs to the eukaryotic ribosomal protein eS8 family. As to quaternary structure, part of the 30S ribosomal subunit.

The protein is Small ribosomal subunit protein eS8 of Staphylothermus marinus (strain ATCC 43588 / DSM 3639 / JCM 9404 / F1).